Reading from the N-terminus, the 190-residue chain is Potassium-transporting ATPase KdpC subunit (190 aa).

A helical transmembrane segment spans residues 11–31 (LIVLMSLITGVAYPLVVTGVA).

The protein belongs to the KdpC family. As to quaternary structure, the system is composed of three essential subunits: KdpA, KdpB and KdpC.

Its subcellular location is the cell inner membrane. Part of the high-affinity ATP-driven potassium transport (or Kdp) system, which catalyzes the hydrolysis of ATP coupled with the electrogenic transport of potassium into the cytoplasm. This subunit acts as a catalytic chaperone that increases the ATP-binding affinity of the ATP-hydrolyzing subunit KdpB by the formation of a transient KdpB/KdpC/ATP ternary complex. The polypeptide is Potassium-transporting ATPase KdpC subunit (Pseudomonas savastanoi pv. phaseolicola (strain 1448A / Race 6) (Pseudomonas syringae pv. phaseolicola (strain 1448A / Race 6))).